The chain runs to 205 residues: Ribosomal RNA large subunit methyltransferase E (205 aa).

The S-adenosyl-L-methionine site is built by G60, W62, D80, D96, and D121. Residue K161 is the Proton acceptor of the active site.

It belongs to the class I-like SAM-binding methyltransferase superfamily. RNA methyltransferase RlmE family.

It is found in the cytoplasm. The catalysed reaction is uridine(2552) in 23S rRNA + S-adenosyl-L-methionine = 2'-O-methyluridine(2552) in 23S rRNA + S-adenosyl-L-homocysteine + H(+). In terms of biological role, specifically methylates the uridine in position 2552 of 23S rRNA at the 2'-O position of the ribose in the fully assembled 50S ribosomal subunit. This is Ribosomal RNA large subunit methyltransferase E from Azoarcus sp. (strain BH72).